We begin with the raw amino-acid sequence, 727 residues long: Translation initiation factor IF-2, mitochondrial (727 aa).

The N-terminal 29 residues, 1–29 (MNQKLLKLENLLRFHTICRQVHSPSQRRL), are a transit peptide targeting the mitochondrion. In terms of domain architecture, tr-type G spans 178-346 (PRSPVVTVMG…ATIALAEILE (169 aa)). Residues 187-194 (GHVDHGKT) form a G1 region. 187 to 194 (GHVDHGKT) is a binding site for GTP. Positions 212-216 (GITQH) are G2. GTP contacts are provided by residues 234–237 (DTPG) and 288–291 (NKCD). Residues 234–237 (DTPG) are G3. The tract at residues 288 to 291 (NKCD) is G4. The segment at 324–326 (SAL) is G5. Threonine 688 bears the Phosphothreonine mark.

The protein belongs to the TRAFAC class translation factor GTPase superfamily. Classic translation factor GTPase family. IF-2 subfamily. Monomer.

The protein localises to the mitochondrion. In terms of biological role, one of the essential components for the initiation of protein synthesis. Protects formylmethionyl-tRNA from spontaneous hydrolysis and promotes its binding to the 30S ribosomal subunits. Also involved in the hydrolysis of GTP during the formation of the 70S ribosomal complex. The chain is Translation initiation factor IF-2, mitochondrial (Mtif2) from Mus musculus (Mouse).